Consider the following 174-residue polypeptide: uncharacterized protein (174 aa).

Belongs to the mimivirus L39/R874 family.

This is an uncharacterized protein from Acanthamoeba polyphaga (Amoeba).